Reading from the N-terminus, the 144-residue chain is uncharacterized protein (144 aa).

The segment covering 125–135 (PQQQNNHQLQS) has biased composition (polar residues). The interval 125–144 (PQQQNNHQLQSKPKAASISR) is disordered.

This is an uncharacterized protein from Rickettsia prowazekii (strain Madrid E).